The following is a 351-amino-acid chain: Nicotinate-nucleotide--dimethylbenzimidazole phosphoribosyltransferase (351 aa).

E317 functions as the Proton acceptor in the catalytic mechanism.

Belongs to the CobT family.

It catalyses the reaction 5,6-dimethylbenzimidazole + nicotinate beta-D-ribonucleotide = alpha-ribazole 5'-phosphate + nicotinate + H(+). Its pathway is nucleoside biosynthesis; alpha-ribazole biosynthesis; alpha-ribazole from 5,6-dimethylbenzimidazole: step 1/2. In terms of biological role, catalyzes the synthesis of alpha-ribazole-5'-phosphate from nicotinate mononucleotide (NAMN) and 5,6-dimethylbenzimidazole (DMB). The sequence is that of Nicotinate-nucleotide--dimethylbenzimidazole phosphoribosyltransferase from Pseudomonas putida (strain ATCC 700007 / DSM 6899 / JCM 31910 / BCRC 17059 / LMG 24140 / F1).